The primary structure comprises 223 residues: uncharacterized protein (223 aa).

The next 7 helical transmembrane spans lie at 25–45 (TYFL…ATMA), 46–66 (IGIS…ILFF), 78–98 (LVWT…MLNF), 105–125 (GPIV…GLSA), 140–160 (FLFA…FVGS), 161–181 (TVAH…FILF), and 199–219 (ISMY…LGIM).

Belongs to the BI1 family.

The protein localises to the cell membrane. This is an uncharacterized protein from Vibrio cholerae serotype O1 (strain ATCC 39315 / El Tor Inaba N16961).